The primary structure comprises 547 residues: Apicoplast pyruvate carrier 1 (547 aa).

The disordered stretch occupies residues M1–C33. The Cytoplasmic portion of the chain corresponds to M1–R45. Residues T21–C33 are compositionally biased toward polar residues. The next 12 membrane-spanning stretches (helical) occupy residues W46 to Y66, A126 to A146, V167 to I187, G189 to E209, G212 to L232, L278 to A298, A345 to I365, I385 to G405, G417 to P437, L445 to F465, S467 to G487, and L515 to P535.

The protein belongs to the major facilitator superfamily. As to quaternary structure, interacts with apicoplast pyruvate carrier 2.

The protein resides in the plastid. The protein localises to the apicoplast. Its subcellular location is the membrane. In terms of biological role, along with apicoplast pyruvate carrier 2, forms apicoplast pyruvate carrier (APC) complex, which transports pyruvate into the apicoplast and may also transport amino acids like methionine, serine, glycine and tryptophan with low efficiency. Required for maintaining pyruvate-dependent metabolic activities in the apicoplast, such as synthesis of fatty acids, isopentenyl pyrophosphate (IPP), dimethylallyl pyrophosphate (DMAPP) and methylerythritol 4-phosphate (MEP). Required for maintaining the integrity of the apicoplast. Required for normal parasite growth. This chain is Apicoplast pyruvate carrier 1, found in Toxoplasma gondii.